We begin with the raw amino-acid sequence, 306 residues long: Ornithine carbamoyltransferase (306 aa).

Residues 51–54 (STRT), glutamine 78, arginine 102, and 129–132 (HPCQ) contribute to the carbamoyl phosphate site. L-ornithine-binding positions include asparagine 160, aspartate 223, and 227 to 228 (SM). Residues 263–264 (CL) and arginine 291 contribute to the carbamoyl phosphate site.

This sequence belongs to the aspartate/ornithine carbamoyltransferase superfamily. OTCase family.

The protein localises to the cytoplasm. It catalyses the reaction carbamoyl phosphate + L-ornithine = L-citrulline + phosphate + H(+). Its pathway is amino-acid biosynthesis; L-arginine biosynthesis; L-arginine from L-ornithine and carbamoyl phosphate: step 1/3. Its function is as follows. Reversibly catalyzes the transfer of the carbamoyl group from carbamoyl phosphate (CP) to the N(epsilon) atom of ornithine (ORN) to produce L-citrulline. In Nostoc punctiforme (strain ATCC 29133 / PCC 73102), this protein is Ornithine carbamoyltransferase (argF).